A 486-amino-acid chain; its full sequence is Patatin-like phospholipase domain-containing protein 2 (486 aa).

The Cytoplasmic portion of the chain corresponds to 1-8 (MFPRETKW). A helical transmembrane segment spans residues 9 to 29 (NISFAGCGFLGVYHIGVASCL). A PNPLA domain is found at 10-179 (ISFAGCGFLG…SDNLPLYELK (170 aa)). The short motif at 14-19 (GCGFLG) is the GXGXXG element. Topologically, residues 30-42 (REHAPFLVANATH) are extracellular. N-linked (GlcNAc...) asparagine glycosylation is present at Asn39. The chain crosses the membrane as a helical span at residues 43–63 (IYGASAGALTATALVTGACLG). The GXSXG motif lies at 45–49 (GASAG). Residue Ser47 is the Nucleophile of the active site. At 64–137 (EAGANIIEVS…IISHFSSKDE (74 aa)) the chain is on the cytoplasmic side. Lys92 participates in a covalent cross-link: Glycyl lysine isopeptide (Lys-Gly) (interchain with G-Cter in ubiquitin). The helical transmembrane segment at 138–158 (LIQANVCSTFIPVYCGLIPPT) threads the bilayer. Residues 159–331 (LQGVRYVDGG…TTLSNMLPVR (173 aa)) are Extracellular-facing. Asp166 (proton acceptor) is an active-site residue. Residues 166–168 (DGG) carry the DGA/G motif. The chain crosses the membrane as a helical span at residues 332–352 (LATAMMVPYTLPLESAVSFTI). At 353 to 486 (RLLEWLPDVP…PQDPPGLPPC (134 aa)) the chain is on the cytoplasmic side. Residue Ser374 is modified to Phosphoserine; in vitro. Ser396 and Ser406 each carry phosphoserine; by PKA. 2 positions are modified to phosphoserine; in vitro: Ser430 and Ser468. A compositionally biased stretch (low complexity) spans 465-476 (APASPTAADPAT). Residues 465–486 (APASPTAADPATPQDPPGLPPC) form a disordered region. A compositionally biased stretch (pro residues) spans 477–486 (PQDPPGLPPC).

Interacts with ABHD5; this association stimulates PNPLA2 triglyceride hydrolase activity. Interacts with SERPINF1; this interaction stimulates the phospholipase A2 activity of PNPLA2. Despite a colocalization in lipid droplets, it probably does not interact with PLIN. Interacts with PLIN5; prevents interaction with ABHD5. Interacts with FAF2. In terms of processing, phosphorylation at Ser-406 by PKA is increased during fasting and moderate intensity exercise, and moderately increases lipolytic activity. Post-translationally, ubiquitinated by PEX2 in response to reactive oxygen species (ROS), leading to its degradation. Ubiquitination is stimulated by LDAH. In terms of tissue distribution, expressed at high levels in white and brown adipose tissue, and to a lesser degree in testis and cardiac muscle. Barely detected in liver, spleen, thymus, kidney, skeletal muscle, and brain. Among the white adipose depots, gonadal fat showed the highest level of expression compared with inguinal and renal white adipose tissues.

The protein resides in the lipid droplet. Its subcellular location is the cell membrane. It is found in the cytoplasm. The catalysed reaction is a triacylglycerol + H2O = a diacylglycerol + a fatty acid + H(+). It carries out the reaction a triacylglycerol + H2O = a 1,2-diacylglycerol + a fatty acid + H(+). The enzyme catalyses a triacylglycerol + H2O = a 1,3-diacylglycerol + a fatty acid + H(+). It catalyses the reaction a triacyl-sn-glycerol + H2O = a 2,3-diacyl-sn-glycerol + a fatty acid + H(+). The catalysed reaction is a triacyl-sn-glycerol + H2O = a 1,3-diacyl-sn-glycerol + a fatty acid + H(+). It carries out the reaction 1,2,3-tri-(9Z-octadecenoyl)-glycerol + H2O = 1,3-di-(9Z-octadecenoyl)-glycerol + (9Z)-octadecenoate + H(+). The enzyme catalyses 1,2,3-tri-(9Z)-hexadecenoylglycerol + H2O = 1,3-di-(9Z)-hexadecenoylglycerol + (9Z)-hexadecenoate + H(+). It catalyses the reaction 1,2,3-tri-(9Z,12Z)-octadecadienoylglycerol + H2O = 1,3-di-(9Z,12Z)-octadecadienoylglycerol + (9Z,12Z)-octadecadienoate + H(+). The catalysed reaction is 1,2,3-tri-(9Z,12Z,15Z)-octadecatrienoylglycerol + H2O = 1,3-di-(9Z,12Z,15Z)-octadecatrienoylglycerol + (9Z,12Z,15Z)-octadecatrienoate + H(+). It carries out the reaction 1,3-di-(9Z)-octadecenoyl-2-hexadecanoylglycerol + H2O = 1,3-di-(9Z-octadecenoyl)-glycerol + hexadecanoate + H(+). The enzyme catalyses 1,2-di-(9Z)-octadecenoyl-3-hexadecanoyl-sn-glycerol + H2O = 1-(9Z)-octadecenoyl-3-hexadecanoyl-sn-glycerol + (9Z)-octadecenoate + H(+). It catalyses the reaction 1-hexadecanoyl-2,3-di-(9Z)-octadecenoyl-sn-glycerol + H2O = 1-hexadecanoyl-3-(9Z)-octadecenoyl-sn-glycerol + (9Z)-octadecenoate + H(+). The catalysed reaction is 1,2,3-tri-(9Z-octadecenoyl)-glycerol + H2O = 2,3-di-(9Z)-octadecenoyl-sn-glycerol + (9Z)-octadecenoate + H(+). It carries out the reaction 1,2,3-tri-(9Z)-hexadecenoylglycerol + H2O = 2,3-di-(9Z)-hexadecenoyl-sn-glycerol + (9Z)-hexadecenoate + H(+). The enzyme catalyses 1,2,3-tri-(9Z,12Z)-octadecadienoylglycerol + H2O = 2,3-di-(9Z,12Z)-octadecadienoyl-sn-glycerol + (9Z,12Z)-octadecadienoate + H(+). It catalyses the reaction 1,2,3-tri-(9Z,12Z,15Z)-octadecatrienoylglycerol + H2O = 2,3-di-(9Z,12Z,15Z)-octadecatrienoyl-sn-glycerol + (9Z,12Z,15Z)-octadecatrienoate + H(+). The catalysed reaction is 1,3-di-(9Z)-octadecenoyl-2-hexadecanoylglycerol + H2O = 2-hexadecanoyl-3-(9Z)-octadecenoyl-sn-glycerol + (9Z)-octadecenoate + H(+). It carries out the reaction 1-hexadecanoyl-2,3-di-(9Z)-octadecenoyl-sn-glycerol + H2O = 2,3-di-(9Z)-octadecenoyl-sn-glycerol + hexadecanoate + H(+). The enzyme catalyses 1,2-di-(9Z)-octadecenoyl-3-hexadecanoyl-sn-glycerol + H2O = 2-(9Z-octadecenoyl)-3-hexadecanoyl-sn-glycerol + (9Z)-octadecenoate + H(+). It catalyses the reaction 1,2-di-(9Z-octadecenoyl)-glycerol + (9Z)-octadecenoate + H(+) = 1,2,3-tri-(9Z-octadecenoyl)-glycerol + H2O. The catalysed reaction is a 1-acylglycerol + a 1,3-diacylglycerol = a triacylglycerol + glycerol. It carries out the reaction a 1-acylglycerol + a 1,2-diacylglycerol = a triacylglycerol + glycerol. The enzyme catalyses 2 a 1-acylglycerol = a 1,2-diacylglycerol + glycerol. It catalyses the reaction a triacylglycerol + all-trans-retinol = an all-trans-retinyl ester + a diacylglycerol. The catalysed reaction is 1-(9Z-octadecenoyl)-glycerol + 1,3-di-(9Z-octadecenoyl)-glycerol = 1,2,3-tri-(9Z-octadecenoyl)-glycerol + glycerol. It carries out the reaction 1-(9Z-octadecenoyl)-glycerol + 1,2-di-(9Z-octadecenoyl)-glycerol = 1,2,3-tri-(9Z-octadecenoyl)-glycerol + glycerol. The enzyme catalyses 2 1-(9Z-octadecenoyl)-glycerol = 1,2-di-(9Z-octadecenoyl)-glycerol + glycerol. It catalyses the reaction 1,2,3-tri-(9Z-octadecenoyl)-glycerol + all-trans-retinol = all-trans-retinyl 9Z-octadecenoate + di-(9Z)-octadecenoylglycerol. The catalysed reaction is a 1,2-diacyl-sn-glycero-3-phosphocholine + H2O = a 1-acyl-sn-glycero-3-phosphocholine + a fatty acid + H(+). It carries out the reaction 1,2,3-tri-(9Z-octadecenoyl)-glycerol + 9-hydroxy-octadecanoate = 9-(9Z-octadecenoyloxy)-octadecanoate + 2,3-di-(9Z)-octadecenoyl-sn-glycerol. The enzyme catalyses 1-hexadecanoyl-2,3-di-(9Z)-octadecenoyl-sn-glycerol + 9-hydroxy-octadecanoate = 9-hexadecanoyloxy-octadecanoate + 2,3-di-(9Z)-octadecenoyl-sn-glycerol. It catalyses the reaction 1,2,3-tri-(10Z)-heptadecenoylglycerol + 9-hydroxy-octadecanoate = 2,3-di-(10Z-heptadecenoyl)-sn-glycerol + 9-(10Z-heptadecenoyloxy)-octadecanoate. The catalysed reaction is 1,2,3-tri-(9Z,12Z)-octadecadienoylglycerol + 9-hydroxy-octadecanoate = 2,3-di-(9Z,12Z)-octadecadienoyl-sn-glycerol + 9-(9Z,12Z-octadecadienoyloxy)-octadecanoate. It carries out the reaction 1,2,3-tri-(9Z)-hexadecenoylglycerol + 9-hydroxy-octadecanoate = 2,3-di-(9Z)-hexadecenoyl-sn-glycerol + 9-(9Z-hexadecenoyloxy)-octadecanoate. The enzyme catalyses 9-hydroxy-octadecanoate + 1,2-di-(9Z-octadecenoyl)-sn-glycerol = 9-(9Z-octadecenoyloxy)-octadecanoate + 2-(9Z-octadecenoyl)-glycerol. It catalyses the reaction 1-hexadecanoyl-2,3-di-(9Z)-octadecenoyl-sn-glycerol + 9-hydroxy-octadecanoate = 1-hexadecanoyl-3-(9Z)-octadecenoyl-sn-glycerol + 9-(9Z-octadecenoyloxy)-octadecanoate. It functions in the pathway glycerolipid metabolism; triacylglycerol degradation. With respect to regulation, stimulated by PKA-dependent PLIN phosphorylation. In terms of biological role, catalyzes the initial step in triglyceride hydrolysis in adipocyte and non-adipocyte lipid droplets. Exhibits a strong preference for the hydrolysis of long-chain fatty acid esters at the sn-2 position of the glycerol backbone and acts coordinately with LIPE/HLS and DGAT2 within the lipolytic cascade. Also possesses acylglycerol transacylase and phospholipase A2 activities. Transfers fatty acid from triglyceride to retinol, hydrolyzes retinylesters, and generates 1,3-diacylglycerol from triglycerides. Regulates adiposome size and may be involved in the degradation of adiposomes. Catalyzes the formation of an ester bond between hydroxy fatty acids and fatty acids derived from triglycerides or diglycerides to generate fatty acid esters of hydroxy fatty acids (FAHFAs) in adipocytes. Acts antagonistically with LDAH in regulation of cellular lipid stores. Inhibits LDAH-stimulated lipid droplet fusion. May play an important role in energy homeostasis. May play a role in the response of the organism to starvation, enhancing hydrolysis of triglycerides and providing free fatty acids to other tissues to be oxidized in situations of energy depletion. The sequence is that of Patatin-like phospholipase domain-containing protein 2 from Mus musculus (Mouse).